Reading from the N-terminus, the 419-residue chain is L-rhamnose isomerase (419 aa).

His262, Asp294, and Asp296 together coordinate Mn(2+).

Belongs to the rhamnose isomerase family. Homotetramer. Mn(2+) serves as cofactor.

The protein resides in the cytoplasm. The enzyme catalyses L-rhamnopyranose = L-rhamnulose. The protein operates within carbohydrate degradation; L-rhamnose degradation; glycerone phosphate from L-rhamnose: step 1/3. Functionally, catalyzes the interconversion of L-rhamnose and L-rhamnulose. This chain is L-rhamnose isomerase, found in Escherichia coli (strain 55989 / EAEC).